Consider the following 431-residue polypeptide: Ribosomal protein uS12 methylthiotransferase RimO (431 aa).

Residues 4 to 120 enclose the MTTase N-terminal domain; it reads LKLYVIVLGC…LAESINKTKK (117 aa). 6 residues coordinate [4Fe-4S] cluster: cysteine 13, cysteine 49, cysteine 83, cysteine 150, cysteine 154, and cysteine 157. One can recognise a Radical SAM core domain in the interval 136–365; the sequence is DSDLPYAYVK…MEVQAEISFL (230 aa). A TRAM domain is found at 368-431; it reads QRLVGKVIDV…TYDLEGELVE (64 aa).

Belongs to the methylthiotransferase family. RimO subfamily. [4Fe-4S] cluster is required as a cofactor.

Its subcellular location is the cytoplasm. It catalyses the reaction L-aspartate(89)-[ribosomal protein uS12]-hydrogen + (sulfur carrier)-SH + AH2 + 2 S-adenosyl-L-methionine = 3-methylsulfanyl-L-aspartate(89)-[ribosomal protein uS12]-hydrogen + (sulfur carrier)-H + 5'-deoxyadenosine + L-methionine + A + S-adenosyl-L-homocysteine + 2 H(+). Its function is as follows. Catalyzes the methylthiolation of an aspartic acid residue of ribosomal protein uS12. This chain is Ribosomal protein uS12 methylthiotransferase RimO, found in Fervidobacterium nodosum (strain ATCC 35602 / DSM 5306 / Rt17-B1).